Consider the following 55-residue polypeptide: Large ribosomal subunit protein bL33 (55 aa).

This sequence belongs to the bacterial ribosomal protein bL33 family.

In Aliivibrio fischeri (strain ATCC 700601 / ES114) (Vibrio fischeri), this protein is Large ribosomal subunit protein bL33.